The following is a 403-amino-acid chain: D-mannonate dehydratase CC0532 (403 aa).

Positions 38 and 123 each coordinate substrate. Tyr160 acts as the Proton donor/acceptor in catalysis. Asp211 lines the Mg(2+) pocket. The active-site Proton donor/acceptor is His213. Mg(2+) is bound by residues Glu237 and Glu263. 5 residues coordinate substrate: Glu263, Arg284, His313, Asp317, and Glu340.

This sequence belongs to the mandelate racemase/muconate lactonizing enzyme family. GalD subfamily. Mg(2+) serves as cofactor.

It catalyses the reaction D-mannonate = 2-dehydro-3-deoxy-D-gluconate + H2O. It functions in the pathway carbohydrate metabolism; pentose and glucuronate interconversion. Its function is as follows. Catalyzes the dehydration of D-mannonate. Has no detectable activity with a panel of 70 other acid sugars (in vitro). The polypeptide is D-mannonate dehydratase CC0532 (Caulobacter vibrioides (strain ATCC 19089 / CIP 103742 / CB 15) (Caulobacter crescentus)).